The following is a 443-amino-acid chain: ATP-dependent protease ATPase subunit HslU (443 aa).

ATP-binding positions include Val18, 60–65, Asp256, Glu321, and Arg393; that span reads GVGKTE.

Belongs to the ClpX chaperone family. HslU subfamily. In terms of assembly, a double ring-shaped homohexamer of HslV is capped on each side by a ring-shaped HslU homohexamer. The assembly of the HslU/HslV complex is dependent on binding of ATP.

The protein localises to the cytoplasm. In terms of biological role, ATPase subunit of a proteasome-like degradation complex; this subunit has chaperone activity. The binding of ATP and its subsequent hydrolysis by HslU are essential for unfolding of protein substrates subsequently hydrolyzed by HslV. HslU recognizes the N-terminal part of its protein substrates and unfolds these before they are guided to HslV for hydrolysis. In Azoarcus sp. (strain BH72), this protein is ATP-dependent protease ATPase subunit HslU.